Consider the following 429-residue polypeptide: Adenylosuccinate synthetase (429 aa).

Residues 12–18 (GDEGKGK) and 40–42 (GHT) contribute to the GTP site. Catalysis depends on aspartate 13, which acts as the Proton acceptor. Mg(2+) is bound by residues aspartate 13 and glycine 40. IMP is bound by residues 13–16 (DEGK), 38–41 (NAGH), threonine 128, arginine 142, glutamine 223, threonine 238, and arginine 302. Catalysis depends on histidine 41, which acts as the Proton donor. 298-304 (TTTGRPR) lines the substrate pocket. GTP contacts are provided by residues arginine 304, 330 to 332 (SID), and 412 to 414 (SVG).

It belongs to the adenylosuccinate synthetase family. Homodimer. The cofactor is Mg(2+).

It is found in the cytoplasm. The enzyme catalyses IMP + L-aspartate + GTP = N(6)-(1,2-dicarboxyethyl)-AMP + GDP + phosphate + 2 H(+). The protein operates within purine metabolism; AMP biosynthesis via de novo pathway; AMP from IMP: step 1/2. Plays an important role in the de novo pathway of purine nucleotide biosynthesis. Catalyzes the first committed step in the biosynthesis of AMP from IMP. The chain is Adenylosuccinate synthetase from Bacillus cereus (strain ATCC 14579 / DSM 31 / CCUG 7414 / JCM 2152 / NBRC 15305 / NCIMB 9373 / NCTC 2599 / NRRL B-3711).